A 309-amino-acid chain; its full sequence is Ribosomal RNA small subunit methyltransferase H (309 aa).

Residues 33-35, D53, F79, D100, and Q107 each bind S-adenosyl-L-methionine; that span reads GGH.

Belongs to the methyltransferase superfamily. RsmH family.

The protein resides in the cytoplasm. The catalysed reaction is cytidine(1402) in 16S rRNA + S-adenosyl-L-methionine = N(4)-methylcytidine(1402) in 16S rRNA + S-adenosyl-L-homocysteine + H(+). Its function is as follows. Specifically methylates the N4 position of cytidine in position 1402 (C1402) of 16S rRNA. The sequence is that of Ribosomal RNA small subunit methyltransferase H from Clostridium kluyveri (strain NBRC 12016).